The primary structure comprises 393 residues: 26S proteasome regulatory subunit RPN9 (393 aa).

The 169-residue stretch at 187-355 (SFYYTSLLYL…ELVTISWVQP (169 aa)) folds into the PCI domain.

It belongs to the proteasome subunit S11 family.

Its function is as follows. Acts as a regulatory subunit of the 26S proteasome which is involved in the ATP-dependent degradation of ubiquitinated proteins. The sequence is that of 26S proteasome regulatory subunit RPN9 (RPN9) from Saccharomyces cerevisiae (strain ATCC 204508 / S288c) (Baker's yeast).